A 1648-amino-acid chain; its full sequence is Homeostatic regulator of DAG (1648 aa).

Residues isoleucine 5–serine 101 form the DMAP1-binding domain. Asparagine 28, asparagine 71, and asparagine 98 each carry an N-linked (GlcNAc...) asparagine glycan. 2 disordered regions span residues proline 52–serine 73 and threonine 96–serine 130. A compositionally biased stretch (basic residues) spans asparagine 60–asparagine 71. Polar residues-rich tracts occupy residues threonine 96–threonine 105 and tyrosine 113–asparagine 128. Serine 99 carries the phosphoserine modification. N-linked (GlcNAc...) asparagine glycans are attached at residues asparagine 128, asparagine 151, and asparagine 209. The segment at alanine 158–leucine 893 is fatty acyl-AMP ligase-like domain 1. The helical transmembrane segment at valine 228–valine 248 threads the bilayer. Residues asparagine 288, asparagine 328, asparagine 575, asparagine 644, and asparagine 730 are each glycosylated (N-linked (GlcNAc...) asparagine). At serine 751 the chain carries Phosphoserine. 4 N-linked (GlcNAc...) asparagine glycosylation sites follow: asparagine 881, asparagine 917, asparagine 995, and asparagine 1009. Residues valine 950–isoleucine 1648 are fatty acyl-AMP ligase-like domain 2. Residues tyrosine 1061–valine 1081 form a helical membrane-spanning segment. Residue asparagine 1198 is glycosylated (N-linked (GlcNAc...) asparagine). A helical membrane pass occupies residues glycine 1224–phenylalanine 1244. N-linked (GlcNAc...) asparagine glycans are attached at residues asparagine 1301, asparagine 1302, asparagine 1447, asparagine 1472, asparagine 1488, asparagine 1565, asparagine 1597, and asparagine 1634.

The protein resides in the vacuole membrane. Its subcellular location is the mitochondrion membrane. Homeostatic regulator of a chemically distinct subset of diacylglycerols (DAGs) with C36 chain length that prevents the toxic accumulation of these specific DAGs in the logarithmic growth phase, which otherwise leads to endoplasmic reticulum stress. Maintains the basal level of DAG subspecies by directly facilitating DAG to triacylglycerol (TAG) conversion process, possibly via adenylation activity of its FLD domains. Does not affect the abundant DAG species (representing over 90% of total DAG pool), comprised of C32 and C34 chain lengths. Required for vacuole fusion-mediated osmoadaptation. The protein is Homeostatic regulator of DAG of Saccharomyces cerevisiae (strain ATCC 204508 / S288c) (Baker's yeast).